A 276-amino-acid polypeptide reads, in one-letter code: Probable ribose-5-phosphate isomerase 3, chloroplastic (276 aa).

The transit peptide at 1–39 (MASLSFVSSSHLTLRTPSIALRSTGSSPRTSVSFSVKAQ) directs the protein to the chloroplast. The residue at position 40 (Ser-40) is an N-acetylserine. Ser-108 carries the post-translational modification Phosphoserine.

It belongs to the ribose 5-phosphate isomerase family. In terms of processing, phosphorylated by SRK2C.

It is found in the plastid. It localises to the chloroplast. The enzyme catalyses aldehydo-D-ribose 5-phosphate = D-ribulose 5-phosphate. Its pathway is carbohydrate degradation; pentose phosphate pathway; D-ribose 5-phosphate from D-ribulose 5-phosphate (non-oxidative stage): step 1/1. Functionally, catalyzes the reversible conversion of ribose-5-phosphate to ribulose 5-phosphate. The protein is Probable ribose-5-phosphate isomerase 3, chloroplastic (RPI3) of Arabidopsis thaliana (Mouse-ear cress).